Here is a 482-residue protein sequence, read N- to C-terminus: Pancreatic lipase-related protein 2 (482 aa).

The N-terminal stretch at 1-30 (MPMDVRGCLFPSVQMLLCWLVSLLLATVGG) is a signal peptide. A disulfide bridge connects residues Cys34 and Cys40. Asn92 carries an N-linked (GlcNAc...) asparagine glycan. Positions 106–118 (IHGFIDKGEEGWL) are required for galactolipase activity. Cys122 and Cys133 form a disulfide bridge. The active-site Nucleophile is the Ser184. Residue Asp208 is the Charge relay system of the active site. Ca(2+) contacts are provided by Glu219, Arg222, Asp224, and Asp227. Cys269 and Cys293 form a disulfide bridge. The interval 270–292 (QKNILSTIVDINGIWEGTRNFAA) is required for galactolipase activity. His295 (charge relay system) is an active-site residue. 2 cysteine pairs are disulfide-bonded: Cys317–Cys328 and Cys331–Cys336. N-linked (GlcNAc...) asparagine glycans are attached at residues Asn366 and Asn441. In terms of domain architecture, PLAT spans 370 to 482 (WRYKVSVTLS…EDVLQSLYPC (113 aa)). The cysteines at positions 466 and 482 are disulfide-linked.

Belongs to the AB hydrolase superfamily. Lipase family. In terms of tissue distribution, expressed in acinar cells of pancreas (at protein level).

It localises to the secreted. It is found in the zymogen granule membrane. The protein localises to the cell projection. Its subcellular location is the neuron projection. It carries out the reaction a triacylglycerol + H2O = a diacylglycerol + a fatty acid + H(+). It catalyses the reaction a 1,2-diacyl-3-O-(beta-D-galactosyl)-sn-glycerol + 2 H2O = 3-beta-D-galactosyl-sn-glycerol + 2 a fatty acid + 2 H(+). The enzyme catalyses 1,2,3-tri-(9Z-octadecenoyl)-glycerol + H2O = di-(9Z)-octadecenoylglycerol + (9Z)-octadecenoate + H(+). The catalysed reaction is di-(9Z)-octadecenoylglycerol + H2O = (9Z-octadecenoyl)-glycerol + (9Z)-octadecenoate + H(+). It carries out the reaction (9Z-octadecenoyl)-glycerol + H2O = glycerol + (9Z)-octadecenoate + H(+). It catalyses the reaction 1-(9Z-octadecenoyl)-glycerol + H2O = glycerol + (9Z)-octadecenoate + H(+). The enzyme catalyses 1,2,3-tripropanoylglycerol + H2O = dipropanoylglycerol + propanoate + H(+). The catalysed reaction is 1,2,3-tributanoylglycerol + H2O = dibutanoylglycerol + butanoate + H(+). It carries out the reaction 1,2,3-trioctanoylglycerol + H2O = dioctanoylglycerol + octanoate + H(+). It catalyses the reaction 1,2-didecanoylglycerol + H2O = decanoylglycerol + decanoate + H(+). The enzyme catalyses long chain 1,2-diacyl-3-O-beta-D-galactosyl-sn-glycerol + H2O = long chain acyl-3-O-beta-D-galactosyl-sn-glycerol + a fatty acid + H(+). The catalysed reaction is 1,2-dioctanoyl-3-O-beta-D-galactosyl-sn-glycerol + H2O = octanoyl-3-(beta-D-galactosyl)-sn-glycerol + octanoate + H(+). It carries out the reaction 1,2-didodecanoyl-3-beta-D-galactosyl-sn-glycerol + H2O = dodecanoyl-3-beta-D-galactosyl-sn-glycerol + dodecanoate + H(+). It catalyses the reaction 1-beta-D-galactosyl-2,3-didodecanoyl-sn-glycerol + H2O = 1-beta-D-galactosyl-dodecanoyl-sn-glycerol + dodecanoate + H(+). The enzyme catalyses a 1,2-diacyl-3-O-[alpha-D-galactosyl-(1-&gt;6)-beta-D-galactosyl]-sn-glycerol + H2O = acyl-3-O-[alpha-D-galactosyl-(1-&gt;6)-beta-D-galactosyl]-sn-glycerol + a fatty acid + H(+). The catalysed reaction is long chain 1,2-diacyl-3-O-[alpha-D-galactosyl-(1-&gt;6)-beta-D-galactosyl]-sn-glycerol + H2O = long chain acyl-3-O-[alpha-D-galactosyl-(1-&gt;6)-beta-D-galactosyl]-sn-glycerol + a fatty acid + H(+). It carries out the reaction 1,2-dioctanoyl-3-O-[alpha-D-galactosyl-(1-&gt;6)-beta-D-galactosyl]-sn-glycerol + H2O = octanoyl-3-O-[alpha-D-galactosyl-(1-&gt;6)-beta-D-galactosyl]-sn-glycerol + octanoate + H(+). It catalyses the reaction 1,2-didodecanoyl-3-O-[alpha-D-galactosyl-(1-&gt;6)-beta-D-galactosyl]-sn-glycerol + H2O = dodecanoyl-3-O-[alpha-D-galactosyl-(1-&gt;6)-beta-D-galactosyl]-sn-glycerol + dodecanoate + H(+). The enzyme catalyses a 1,2-diacyl-sn-glycero-3-phosphocholine + H2O = a monoacyl-sn-glycero-3-phosphocholine + a fatty acid + H(+). Its pathway is glycerolipid metabolism; triacylglycerol degradation. It participates in glycolipid metabolism. With respect to regulation, CLPS stimulates triacylglycerol lipase activity. Triacylglycerol lipase activity is not inhibited by increasing bile salt concentration. In terms of biological role, lipase that primarily hydrolyzes triglycerides and galactosylglycerides. In neonates, may play a major role in pancreatic digestion of dietary fats such as milk fat globules enriched in long-chain triglycerides. Hydrolyzes short-, medium- and long-chain fatty acyls in triglycerides without apparent positional specificity. Can completely deacylate triacylglycerols. When the liver matures and bile salt synthesis increases, likely functions mainly as a galactolipase and monoacylglycerol lipase. Hydrolyzes monogalactosyldiglycerols (MGDG) and digalactosyldiacylglycerols (DGDG) present in a plant-based diet, releasing long-chain polyunsaturated fatty acids. Hydrolyzes medium- and long-chain fatty acyls in galactolipids. May act together with LIPF to hydrolyze partially digested triglycerides. Hydrolyzes long-chain monoglycerides with high efficiency. In cytotoxic T cells, contributes to perforin-dependent cell lysis, but is unlikely to mediate direct cytotoxicity. Also has low phospholipase activity. In neurons, required for the localization of the phospholipid 1-oleoyl-2-palmitoyl-PC (OPPC) to neurite tips through acyl chain remodeling of membrane phospholipids. The resulting OPPC-rich lipid membrane domain recruits the t-SNARE protein STX4 by selectively interacting with the STX4 transmembrane domain and this promotes surface expression of the dopamine transporter SLC6A3/DAT at neurite tips by facilitating fusion of SLC6A3-containing transport vesicles with the plasma membrane. The protein is Pancreatic lipase-related protein 2 of Mus musculus (Mouse).